Reading from the N-terminus, the 314-residue chain is Ribosomal protein L11 methyltransferase (314 aa).

The S-adenosyl-L-methionine site is built by T161, G182, D204, and N248.

Belongs to the methyltransferase superfamily. PrmA family.

It is found in the cytoplasm. The enzyme catalyses L-lysyl-[protein] + 3 S-adenosyl-L-methionine = N(6),N(6),N(6)-trimethyl-L-lysyl-[protein] + 3 S-adenosyl-L-homocysteine + 3 H(+). Its function is as follows. Methylates ribosomal protein L11. This is Ribosomal protein L11 methyltransferase from Listeria innocua serovar 6a (strain ATCC BAA-680 / CLIP 11262).